Consider the following 169-residue polypeptide: Probable prefoldin subunit 3 (169 aa).

This sequence belongs to the prefoldin subunit alpha family. Heterohexamer of two PFD-alpha type and four PFD-beta type subunits.

Its function is as follows. Binds specifically to cytosolic chaperonin (c-CPN) and transfers target proteins to it. Binds to nascent polypeptide chain and promotes folding in an environment in which there are many competing pathways for nonnative proteins. This is Probable prefoldin subunit 3 from Schizosaccharomyces pombe (strain 972 / ATCC 24843) (Fission yeast).